We begin with the raw amino-acid sequence, 340 residues long: Inactive hyaluronidase B (340 aa).

Disulfide bonds link Cys-21–Cys-310 and Cys-187–Cys-199. N-linked (GlcNAc...) asparagine glycans are attached at residues Asn-66 and Asn-81.

Belongs to the glycosyl hydrolase 56 family. N-glycosylated on at least two Asn residues by identical heptasaccharide units composed of Man, GlcNAc, and Fuc residues in the molar ration of 3:2:2. Expressed by the venom gland.

Its subcellular location is the secreted. Has no hyaluronidase activity. In Vespula vulgaris (Yellow jacket), this protein is Inactive hyaluronidase B.